Reading from the N-terminus, the 122-residue chain is Antitoxin protein TsiV3 (122 aa).

A signal peptide spans 1–24 (MNNLLSAYVTMLLILLSISGGAIA). Cystine bridges form between Cys-28–Cys-41 and Cys-82–Cys-100.

Homodimer; dimerization is critical for inhibitory activity. Forms a heterotetramer with VgrG3 composed of one TsiV3 homodimer and two VgrG3 molecules.

Immunity protein that plays a role in preventing early activation of toxin VgrG3. This chain is Antitoxin protein TsiV3, found in Vibrio cholerae serotype O1 (strain ATCC 39315 / El Tor Inaba N16961).